Here is a 394-residue protein sequence, read N- to C-terminus: Choline/ethanolamine kinase (394 aa).

The disordered stretch occupies residues 1 to 42; the sequence is MAADGTGVVGGGAVGGGLPKDGLQDAKCPEPIPNRRRASSLS. At alanine 2 the chain carries N-acetylalanine. The span at 7-19 shows a compositional bias: gly residues; the sequence is GVVGGGAVGGGLP. ATP is bound by residues 75–81, arginine 104, 146–152, glutamine 244, and aspartate 264; these read SGGLSNL and QYLPSRP. Residue 77–79 coordinates substrate; sequence GLS.

The protein belongs to the choline/ethanolamine kinase family. As to quaternary structure, homodimer, and heterodimer with CHKA. As to expression, expressed ubiquitously with the highest level in testis.

The enzyme catalyses choline + ATP = phosphocholine + ADP + H(+). It carries out the reaction ethanolamine + ATP = phosphoethanolamine + ADP + H(+). The protein operates within phospholipid metabolism; phosphatidylethanolamine biosynthesis; phosphatidylethanolamine from ethanolamine: step 1/3. Its function is as follows. Has a key role in phospholipid metabolism, and catalyzes the first step of phosphatidylethanolamine and phosphatidylcholine biosynthesis. This is Choline/ethanolamine kinase (Chkb) from Mus musculus (Mouse).